A 289-amino-acid chain; its full sequence is MDLSKFNEQQKQILNRIENLANFDCEFSLSDSVNVKFKNLDQAKKDEIYNLALSLKPWRKGPFLLDDIYIDSEWQSFIKFNILAPHLNLAGKCVADVGCNNGYYMFKMLSYDPKSITGFDPSVHTYLQFKFLNKFIRSNINYQLLGVESLPEYAAKFDTIFCLGVIYHRSDPIKMLKELKTALNTGGELFLDTMYIDMDGDFALSPKDRYSKIPNIYFVPTLSALQNWCERAKFKDFTLLETKATDLNEQRKTQWIDGESLSNFLDPADNTKTIEGYPAPKRAYVRVKI.

Carboxy-S-adenosyl-L-methionine contacts are provided by residues K60, W74, K79, G98, 120 to 122 (DPS), 147 to 148 (VE), Y167, and R282.

It belongs to the class I-like SAM-binding methyltransferase superfamily. CmoB family. In terms of assembly, homotetramer.

The enzyme catalyses carboxy-S-adenosyl-L-methionine + 5-hydroxyuridine(34) in tRNA = 5-carboxymethoxyuridine(34) in tRNA + S-adenosyl-L-homocysteine + H(+). Its function is as follows. Catalyzes carboxymethyl transfer from carboxy-S-adenosyl-L-methionine (Cx-SAM) to 5-hydroxyuridine (ho5U) to form 5-carboxymethoxyuridine (cmo5U) at position 34 in tRNAs. The protein is tRNA U34 carboxymethyltransferase of Campylobacter concisus (strain 13826).